We begin with the raw amino-acid sequence, 225 residues long: MKLVVSVMPKSLEEAQEIDVSRYEEADIIEWRADFLAKDDILNVAPAIFEKFAGRELIFTLRTRQEGGEIELSDDEYVALIKEVAGFYQPDYIDFEYFSHKGKFEEMLEFPNLVLSYHNFEETPENMMEILSELTSLTPKVVKVSVMAHNEQDVLDLMNYTRGFKTLNPEQDFVTISMGKVGRISRIAADLTGSSWSFASQDMASAPGQISLSNMKKIQEILNEN.

Residues Ser6, 30-32 (EWR), and Arg62 contribute to the 3-dehydroquinate site. Catalysis depends on His118, which acts as the Proton donor/acceptor. The Schiff-base intermediate with substrate role is filled by Lys143. Positions 186, 205, and 209 each coordinate 3-dehydroquinate.

The protein belongs to the type-I 3-dehydroquinase family. As to quaternary structure, homodimer.

It carries out the reaction 3-dehydroquinate = 3-dehydroshikimate + H2O. It functions in the pathway metabolic intermediate biosynthesis; chorismate biosynthesis; chorismate from D-erythrose 4-phosphate and phosphoenolpyruvate: step 3/7. In terms of biological role, involved in the third step of the chorismate pathway, which leads to the biosynthesis of aromatic amino acids. Catalyzes the cis-dehydration of 3-dehydroquinate (DHQ) and introduces the first double bond of the aromatic ring to yield 3-dehydroshikimate. In Streptococcus sanguinis (strain SK36), this protein is 3-dehydroquinate dehydratase.